The following is a 424-amino-acid chain: 3-ketoacyl-CoA thiolase A, peroxisomal (424 aa).

A peroxisome-targeting transit peptide spans 1–26; it reads MHRLQVVLGHLAGRPESSSALQAAPC. Residues 1 to 26 form a PTS2-type peroxisomal targeting signal region; the sequence is MHRLQVVLGHLAGRPESSSALQAAPC. Cys-123 serves as the catalytic Acyl-thioester intermediate. Lys-173 and Lys-234 each carry N6-acetyllysine. Active-site proton acceptor residues include His-377 and Cys-408.

The protein belongs to the thiolase-like superfamily. Thiolase family. Homodimer. Interacts (via PTS2-type peroxisomal targeting signal region) with PEX7; leading to its translocation into peroxisomes. In terms of tissue distribution, mainly expressed in liver and intestine.

The protein resides in the peroxisome. The catalysed reaction is an acyl-CoA + acetyl-CoA = a 3-oxoacyl-CoA + CoA. It carries out the reaction 2 acetyl-CoA = acetoacetyl-CoA + CoA. The enzyme catalyses tetradecanoyl-CoA + acetyl-CoA = 3-oxohexadecanoyl-CoA + CoA. It catalyses the reaction hexanoyl-CoA + acetyl-CoA = 3-oxooctanoyl-CoA + CoA. The catalysed reaction is 3-oxohexadecanedioyl-CoA + CoA = tetradecanedioyl-CoA + acetyl-CoA. It carries out the reaction 3-oxo-(6Z,9Z,12Z,15Z,18Z,21Z)-tetracosahexaenoyl-CoA + CoA = (4Z,7Z,10Z,13Z,16Z,19Z)-docosahexaenoyl-CoA + acetyl-CoA. The protein operates within lipid metabolism; peroxisomal fatty acid beta-oxidation. In terms of biological role, responsible for the thiolytic cleavage of straight chain 3-keto fatty acyl-CoAs (3-oxoacyl-CoAs). Plays an important role in fatty acid peroxisomal beta-oxidation. Catalyzes the cleavage of short, medium, long, and very long straight chain 3-oxoacyl-CoAs. The protein is 3-ketoacyl-CoA thiolase A, peroxisomal of Mus musculus (Mouse).